A 372-amino-acid chain; its full sequence is tRNA-specific 2-thiouridylase MnmA (372 aa).

ATP is bound by residues 16 to 23 (GMSGGVDS) and Met-42. The interval 102–104 (NPD) is interaction with target base in tRNA. Cys-107 (nucleophile) is an active-site residue. A disulfide bond links Cys-107 and Cys-205. Residue Gly-132 coordinates ATP. The interaction with tRNA stretch occupies residues 155–157 (KDQ). The active-site Cysteine persulfide intermediate is the Cys-205. The segment at 317–318 (RY) is interaction with tRNA.

It belongs to the MnmA/TRMU family.

Its subcellular location is the cytoplasm. The enzyme catalyses S-sulfanyl-L-cysteinyl-[protein] + uridine(34) in tRNA + AH2 + ATP = 2-thiouridine(34) in tRNA + L-cysteinyl-[protein] + A + AMP + diphosphate + H(+). Catalyzes the 2-thiolation of uridine at the wobble position (U34) of tRNA, leading to the formation of s(2)U34. The polypeptide is tRNA-specific 2-thiouridylase MnmA (Shewanella putrefaciens (strain CN-32 / ATCC BAA-453)).